A 353-amino-acid chain; its full sequence is UDP-N-acetylglucosamine--N-acetylmuramyl-(pentapeptide) pyrophosphoryl-undecaprenol N-acetylglucosamine transferase (353 aa).

UDP-N-acetyl-alpha-D-glucosamine is bound by residues 10 to 12 (TGG), Asn-124, Ser-183, and Gln-283.

It belongs to the glycosyltransferase 28 family. MurG subfamily.

The protein localises to the cell inner membrane. It carries out the reaction di-trans,octa-cis-undecaprenyl diphospho-N-acetyl-alpha-D-muramoyl-L-alanyl-D-glutamyl-meso-2,6-diaminopimeloyl-D-alanyl-D-alanine + UDP-N-acetyl-alpha-D-glucosamine = di-trans,octa-cis-undecaprenyl diphospho-[N-acetyl-alpha-D-glucosaminyl-(1-&gt;4)]-N-acetyl-alpha-D-muramoyl-L-alanyl-D-glutamyl-meso-2,6-diaminopimeloyl-D-alanyl-D-alanine + UDP + H(+). Its pathway is cell wall biogenesis; peptidoglycan biosynthesis. Functionally, cell wall formation. Catalyzes the transfer of a GlcNAc subunit on undecaprenyl-pyrophosphoryl-MurNAc-pentapeptide (lipid intermediate I) to form undecaprenyl-pyrophosphoryl-MurNAc-(pentapeptide)GlcNAc (lipid intermediate II). This chain is UDP-N-acetylglucosamine--N-acetylmuramyl-(pentapeptide) pyrophosphoryl-undecaprenol N-acetylglucosamine transferase, found in Helicobacter pylori (strain J99 / ATCC 700824) (Campylobacter pylori J99).